The sequence spans 427 residues: MSMIEEIYAREIFDSRGNPTVEVELYTESGAYGFARVPSGASTGVHEALELRDGEDRFGGKGVRKACSKVNEEIGPNLVGMDVTFQSAIDRALLELDGTDNKENLGANAMLGVSLAAARASAEFLGLPLYQVLGGVSSSTLPIPQMNILNGGEHADNNVDIQEFMIMPIRANNFQHAMRMGVEIFHALKNVLKDEGLSTSVGDEGGFAPDLKSNKEALEYIITAIEKVGYKPGEQVMLAIDAAASELYQGDKYHLEGEGKSLTADEMIDLYQDLVENYPIISIEDGLSEDDWEGWKKMTEKFQGKIQLVGDDLFVTNTDRLTRGIKEDIANSILIKLNQIGTVTETLEAIELAKKNGYTSVISHRSGETDDPFIADLAVATNAGQIKTGAPSRMDRVAKYNQLIRISEELYGVSRYPGMGSFYNLEV.

Glutamine 162 is a (2R)-2-phosphoglycerate binding site. Glutamate 204 serves as the catalytic Proton donor. Mg(2+) contacts are provided by aspartate 241, glutamate 284, and aspartate 311. (2R)-2-phosphoglycerate contacts are provided by lysine 336, arginine 365, serine 366, and lysine 387. Catalysis depends on lysine 336, which acts as the Proton acceptor.

It belongs to the enolase family. The cofactor is Mg(2+).

Its subcellular location is the cytoplasm. It localises to the secreted. It is found in the cell surface. The catalysed reaction is (2R)-2-phosphoglycerate = phosphoenolpyruvate + H2O. Its pathway is carbohydrate degradation; glycolysis; pyruvate from D-glyceraldehyde 3-phosphate: step 4/5. In terms of biological role, catalyzes the reversible conversion of 2-phosphoglycerate (2-PG) into phosphoenolpyruvate (PEP). It is essential for the degradation of carbohydrates via glycolysis. The chain is Enolase from Natranaerobius thermophilus (strain ATCC BAA-1301 / DSM 18059 / JW/NM-WN-LF).